The sequence spans 287 residues: Putative B3 domain-containing protein Os08g0157700 (287 aa).

A compositionally biased stretch (acidic residues) spans Ala17–Gln29. The interval Ala17 to Ala36 is disordered. Residues Phe71–His168 constitute a DNA-binding region (TF-B3).

It localises to the nucleus. The polypeptide is Putative B3 domain-containing protein Os08g0157700 (Oryza sativa subsp. japonica (Rice)).